Consider the following 233-residue polypeptide: Nickel import system ATP-binding protein NikE (233 aa).

The ABC transporter domain maps to 2 to 228; that stretch reads IELKHVTFGY…DRHPYTKELV (227 aa). An ATP-binding site is contributed by 35-42; that stretch reads GESGCGKS.

Belongs to the ABC transporter superfamily. The complex is composed of two ATP-binding proteins (NikD and NikE), two transmembrane proteins (NikB and NikC) and a solute-binding protein (NikA).

Its subcellular location is the cell membrane. The catalysed reaction is Ni(2+)(out) + ATP + H2O = Ni(2+)(in) + ADP + phosphate + H(+). Functionally, part of the ABC transporter complex NikABCDE (Opp2) involved in nickel import. Probably responsible for energy coupling to the transport system. This is Nickel import system ATP-binding protein NikE from Staphylococcus aureus (strain Mu50 / ATCC 700699).